We begin with the raw amino-acid sequence, 450 residues long: MLVTAYLAFVGLLASCLGLELSRCRAKPPGRACSNPSFLRSQLDFYQVYFLALAADWLQAPYLYKLYQHYYFLEGQIAILYVCGLASTVLFGLVASSLVDWLGRKNSCVLFSLTYSLCCLTKLSQDYFVLLVGRALGGLSTALLFSAFEAWYIHEHVERHDFPTEWIPATFARAAFWNHVLAVVAGVAAEAVASWIGLGPVAPFVAAIPLLALAGALALRNWGENYDRQRAFSRTCAGGLRCLLSDRRVLLLGTIQALFESVIFIFVFLWTPVLDPHGAPLGIVFSSFMAASLLGSSLYRIATSKRYHLQPMHLLSLAVLIVVFSLFMLTFSTSPGQESPVESFIAFLLIELACGLYFPSMSFLRRKVIPETEQAGVLNWFRVPLHLLACLGLLVLHDSDRKTGTRNMFSICSAVMVMALLAVVGLFTVVRHDAELRVPSPTEEPYAPEL.

The next 12 membrane-spanning stretches (helical) occupy residues 1–21 (MLVTAYLAFVGLLASCLGLEL), 43–63 (LDFYQVYFLALAADWLQAPYL), 79–99 (ILYVCGLASTVLFGLVASSLV), 128–148 (FVLLVGRALGGLSTALLFSAF), 174–194 (AAFWNHVLAVVAGVAAEAVAS), 195–215 (WIGLGPVAPFVAAIPLLALAG), 249–269 (VLLLGTIQALFESVIFIFVFL), 278–298 (GAPLGIVFSSFMAASLLGSSL), 311–331 (PMHLLSLAVLIVVFSLFMLTF), 344–364 (FIAFLLIELACGLYFPSMSFL), 376–396 (GVLNWFRVPLHLLACLGLLVL), and 409–429 (FSICSAVMVMALLAVVGLFTV).

It belongs to the major facilitator superfamily.

The protein localises to the cell membrane. Mediates high-affinity intracellular uptake of the rare oligo-element molybdenum. The polypeptide is Molybdate-anion transporter (MFSD5) (Pongo abelii (Sumatran orangutan)).